Reading from the N-terminus, the 143-residue chain is MTPVRRRKLFILLFALSVLSAAAALVLYALRQNISLFYTPTQIVAGEAPAKHHIRVGGMVEANSIVRAKKGLDVQFKITDFENTIVVTYSGILPDLFREGQGIVAEGEVTDNHHFHAIQVLAKHDANYMPPQVKSALADKVKQ.

Over Met1–Lys8 the chain is Cytoplasmic. The helical; Signal-anchor for type II membrane protein transmembrane segment at Leu9–Ala29 threads the bilayer. Over Leu30 to Gln143 the chain is Periplasmic. Heme is bound by residues His124 and Tyr128.

It belongs to the CcmE/CycJ family.

The protein localises to the cell inner membrane. Its function is as follows. Heme chaperone required for the biogenesis of c-type cytochromes. Transiently binds heme delivered by CcmC and transfers the heme to apo-cytochromes in a process facilitated by CcmF and CcmH. This chain is Cytochrome c-type biogenesis protein CcmE, found in Legionella pneumophila.